The chain runs to 276 residues: Phosphonates import ATP-binding protein PhnC (276 aa).

The region spanning 2–246 (LEIHNLQKSY…VLTRIYGAED (245 aa)) is the ABC transporter domain. Position 35-42 (35-42 (GPSGAGKS)) interacts with ATP.

Belongs to the ABC transporter superfamily. Phosphonates importer (TC 3.A.1.9.1) family. The complex is composed of two ATP-binding proteins (PhnC), two transmembrane proteins (PhnE) and a solute-binding protein (PhnD).

The protein localises to the cell inner membrane. It carries out the reaction phosphonate(out) + ATP + H2O = phosphonate(in) + ADP + phosphate + H(+). Its function is as follows. Part of the ABC transporter complex PhnCDE involved in phosphonates import. Responsible for energy coupling to the transport system. In Alcaligenes faecalis, this protein is Phosphonates import ATP-binding protein PhnC.